The chain runs to 281 residues: Bifunctional protein FolD (281 aa).

Residues Gly-165 to Gly-167, Thr-192, and Val-233 contribute to the NADP(+) site.

The protein belongs to the tetrahydrofolate dehydrogenase/cyclohydrolase family. As to quaternary structure, homodimer.

It carries out the reaction (6R)-5,10-methylene-5,6,7,8-tetrahydrofolate + NADP(+) = (6R)-5,10-methenyltetrahydrofolate + NADPH. It catalyses the reaction (6R)-5,10-methenyltetrahydrofolate + H2O = (6R)-10-formyltetrahydrofolate + H(+). The protein operates within one-carbon metabolism; tetrahydrofolate interconversion. Functionally, catalyzes the oxidation of 5,10-methylenetetrahydrofolate to 5,10-methenyltetrahydrofolate and then the hydrolysis of 5,10-methenyltetrahydrofolate to 10-formyltetrahydrofolate. This chain is Bifunctional protein FolD, found in Mycolicibacterium paratuberculosis (strain ATCC BAA-968 / K-10) (Mycobacterium paratuberculosis).